We begin with the raw amino-acid sequence, 185 residues long: Putative manganese efflux pump MntP (185 aa).

Transmembrane regions (helical) follow at residues 3 to 23 (IFTL…VSLA), 40 to 60 (LLFV…VSVI), 64 to 84 (FDAY…LRMI), 102 to 122 (TFSR…AVGI), 124 to 144 (LSLA…FVLI), and 165 to 185 (EIFG…DAMM).

Belongs to the MntP (TC 9.B.29) family.

Its subcellular location is the cell inner membrane. Its function is as follows. Probably functions as a manganese efflux pump. The sequence is that of Putative manganese efflux pump MntP from Elusimicrobium minutum (strain Pei191).